The following is a 342-amino-acid chain: tRNA-specific 2-thiouridylase MnmA (342 aa).

Residues 6–13 (LLSGGVDS) and Leu32 each bind ATP. Cys92 serves as the catalytic Nucleophile. Cys92 and Cys191 form a disulfide bridge. Residue Gly116 coordinates ATP. Positions 138-140 (KDQ) are interaction with tRNA. Residue Cys191 is the Cysteine persulfide intermediate of the active site. The interval 293–294 (RY) is interaction with tRNA.

Belongs to the MnmA/TRMU family.

Its subcellular location is the cytoplasm. It carries out the reaction S-sulfanyl-L-cysteinyl-[protein] + uridine(34) in tRNA + AH2 + ATP = 2-thiouridine(34) in tRNA + L-cysteinyl-[protein] + A + AMP + diphosphate + H(+). In terms of biological role, catalyzes the 2-thiolation of uridine at the wobble position (U34) of tRNA, leading to the formation of s(2)U34. This Helicobacter acinonychis (strain Sheeba) protein is tRNA-specific 2-thiouridylase MnmA.